The following is a 346-amino-acid chain: Phosphate-binding protein PstS (346 aa).

A signal peptide spans 1 to 25 (MKVMRTTVATVVAATLSMSAFSVFA). Residues 34-36 (ATF), S63, D81, and 164-166 (SGT) contribute to the phosphate site.

It belongs to the PstS family. The complex is composed of two ATP-binding proteins (PstB), two transmembrane proteins (PstC and PstA) and a solute-binding protein (PstS).

Its subcellular location is the periplasm. Part of the ABC transporter complex PstSACB involved in phosphate import. This Escherichia coli (strain K12) protein is Phosphate-binding protein PstS (pstS).